The primary structure comprises 205 residues: SREBP regulating gene protein (205 aa).

Over 1 to 16 (MVNLAAMVWRRLLRKR) the chain is Cytoplasmic. The chain crosses the membrane as a helical span at residues 17-35 (WVLALVFGLSLVYFLSSTF). Residues 36-205 (KQEERAVRDR…GESPPELFPA (170 aa)) are Lumenal-facing. N67 carries N-linked (GlcNAc...) asparagine glycosylation.

The protein belongs to the SPRING family. As to quaternary structure, interacts with SCAP.

It is found in the golgi apparatus membrane. Functionally, positively regulates hepatic SREBP signaling pathway by modulating the proper localization of SCAP (SREBP cleavage-activating protein) to the endoplasmic reticulum, thereby controlling the level of functional SCAP. The sequence is that of SREBP regulating gene protein from Homo sapiens (Human).